A 217-amino-acid polypeptide reads, in one-letter code: Putative 8-oxo-dGTP diphosphatase 3 (217 aa).

A Nudix hydrolase domain is found at 30 to 164 (GRYGAAGLLL…PGFAASWQRL (135 aa)). The disordered stretch occupies residues 67–92 (LPGGARDSHETPEQTAVRESSEEAGL). Residues Gly-70, Glu-85, Glu-88, and Glu-89 each coordinate Mg(2+). The Nudix box signature appears at 70-91 (GARDSHETPEQTAVRESSEEAG).

It belongs to the Nudix hydrolase family. Mg(2+) is required as a cofactor. Mn(2+) serves as cofactor.

It carries out the reaction 8-oxo-dGTP + H2O = 8-oxo-dGMP + diphosphate + H(+). Functionally, may be involved in the GO system responsible for removing an oxidatively damaged form of guanine (7,8-dihydro-8-oxoguanine, 8-oxo-dGTP) from DNA and the nucleotide pool. 8-oxo-dGTP is inserted opposite dA and dC residues of template DNA with almost equal efficiency thus leading to A.T to G.C transversions. MutT specifically degrades 8-oxo-dGTP to the monophosphate. The polypeptide is Putative 8-oxo-dGTP diphosphatase 3 (mutT3) (Mycobacterium tuberculosis (strain CDC 1551 / Oshkosh)).